We begin with the raw amino-acid sequence, 1342 residues long: DNA-directed RNA polymerase subunit beta (1342 aa).

It belongs to the RNA polymerase beta chain family. As to quaternary structure, the RNAP catalytic core consists of 2 alpha, 1 beta, 1 beta' and 1 omega subunit. When a sigma factor is associated with the core the holoenzyme is formed, which can initiate transcription.

The catalysed reaction is RNA(n) + a ribonucleoside 5'-triphosphate = RNA(n+1) + diphosphate. Functionally, DNA-dependent RNA polymerase catalyzes the transcription of DNA into RNA using the four ribonucleoside triphosphates as substrates. The chain is DNA-directed RNA polymerase subunit beta from Salmonella gallinarum (strain 287/91 / NCTC 13346).